A 461-amino-acid chain; its full sequence is Ribosomal protein uS12 methylthiotransferase RimO (461 aa).

In terms of domain architecture, MTTase N-terminal spans 13-128; the sequence is PKVGFVSLGC…VMQHVHMHLP (116 aa). Residues Cys-22, Cys-58, Cys-87, Cys-159, Cys-163, and Cys-166 each contribute to the [4Fe-4S] cluster site. The 246-residue stretch at 145–390 folds into the Radical SAM core domain; that stretch reads LTPRHYAYLK…MEVAEEVSAK (246 aa). The TRAM domain maps to 393 to 461; it reads AKKVGKTLKV…ADGHDLWGEV (69 aa).

It belongs to the methylthiotransferase family. RimO subfamily. [4Fe-4S] cluster serves as cofactor.

The protein resides in the cytoplasm. The enzyme catalyses L-aspartate(89)-[ribosomal protein uS12]-hydrogen + (sulfur carrier)-SH + AH2 + 2 S-adenosyl-L-methionine = 3-methylsulfanyl-L-aspartate(89)-[ribosomal protein uS12]-hydrogen + (sulfur carrier)-H + 5'-deoxyadenosine + L-methionine + A + S-adenosyl-L-homocysteine + 2 H(+). Functionally, catalyzes the methylthiolation of an aspartic acid residue of ribosomal protein uS12. The polypeptide is Ribosomal protein uS12 methylthiotransferase RimO (Paraburkholderia xenovorans (strain LB400)).